The following is a 127-amino-acid chain: uncharacterized protein (127 aa).

The helical transmembrane segment at 5-25 (ILGITIAFIILLLTTVAILFS) threads the bilayer.

The protein localises to the membrane. This is an uncharacterized protein from Mycoplasma genitalium (strain ATCC 33530 / DSM 19775 / NCTC 10195 / G37) (Mycoplasmoides genitalium).